Here is a 542-residue protein sequence, read N- to C-terminus: Probable quinate permease (542 aa).

At 1–22 (MSILALVEDRPTPKEVYNWKIY) the chain is on the cytoplasmic side. Residues 23 to 43 (LLAAVASFTSCMIGYDSAFIG) traverse the membrane as a helical segment. Residues 44–74 (TTLALSSFREEFGFSTMSKTAVNLVSANIVS) are Extracellular-facing. The helical transmembrane segment at 75–95 (CYQAGAFFGAFFAYPIGHFWG) threads the bilayer. Over 96–97 (RK) the chain is Cytoplasmic. The helical transmembrane segment at 98–118 (WGLLFAGTIFTLGAGLMLGAN) threads the bilayer. Residues 119-130 (GDRGLGLLYGGR) lie on the Extracellular side of the membrane. Residues 131–151 (VLAGLGVGAGSNITPIYISEM) form a helical membrane-spanning segment. Over 152–159 (APPSIRGR) the chain is Cytoplasmic. A helical membrane pass occupies residues 160 to 180 (LVGVYELGWQIGGLVGFWINY). Topologically, residues 181–193 (GVSETLAPSHKQW) are extracellular. The helical transmembrane segment at 194–214 (IIPFAVQLIPSGLLLIGAVFL) threads the bilayer. Residues 215–285 (KESPRWLFSR…AGTNKKVMYR (71 aa)) are Cytoplasmic-facing. Residues 286-306 (LFLGSMLFFWQNGSGINAINY) traverse the membrane as a helical segment. At 307-325 (YSPTVFKSIGLHGANTSMF) the chain is on the extracellular side. A helical membrane pass occupies residues 326–346 (STGIFGVVKTVVTFVWLLYLI). The Cytoplasmic portion of the chain corresponds to 347-352 (DRVGRR). A helical transmembrane segment spans residues 353–373 (LLLLIGAAGAAVCLLIVGAYI). Residues 374 to 387 (KIADPASNPTQEMT) lie on the Extracellular side of the membrane. Residues 388–408 (GGGIAAMFFFYLYTVFYTPSW) form a helical membrane-spanning segment. Residues 409–456 (NGTPWVMNSEMFEPNMRSLAQACAAASNWLWNFLISRFTPQMFAKMEY) are Cytoplasmic-facing. The helical transmembrane segment at 457–477 (GVWFFFASLMLLSIVFVFFLV) threads the bilayer. At 478–542 (PETKGIPLES…EHVSEDLPKV (65 aa)) the chain is on the extracellular side. The segment at 523-542 (GYSKTGEQQVEHVSEDLPKV) is disordered. Residues 531-542 (QVEHVSEDLPKV) are compositionally biased toward basic and acidic residues.

It belongs to the major facilitator superfamily. Sugar transporter (TC 2.A.1.1) family. In terms of assembly, interacts with creB. Post-translationally, ubiquitinated. Deubiquitinated by creB, probably to control its activity or amount.

The protein localises to the cell membrane. Functionally, integral membrane transporter that imports quinic acid to be catabolized as a carbon source. The chain is Probable quinate permease (qutD) from Aspergillus fumigatus (strain ATCC MYA-4609 / CBS 101355 / FGSC A1100 / Af293) (Neosartorya fumigata).